We begin with the raw amino-acid sequence, 223 residues long: Ubiquitin carboxyl-terminal hydrolase isozyme L1 (223 aa).

Residue Met1 is modified to N-acetylmethionine. Positions 2-221 (QLKPMEINPE…VRFSAVALCK (220 aa)) constitute a UCH catalytic domain. The segment at 5-10 (PMEINP) is interaction with ubiquitin. Residue Cys90 is the Nucleophile of the active site. Ser125 is modified (phosphoserine). His161 acts as the Proton donor in catalysis. The segment at 211 to 216 (EVRFSA) is interaction with ubiquitin. Cys220 carries the S-farnesyl cysteine lipid modification. A propeptide spans 221 to 223 (KAA) (removed in mature form).

Belongs to the peptidase C12 family. In terms of assembly, monomer. Homodimer. Interacts with COPS5 and SNCA. Post-translationally, O-glycosylated. As to expression, expressed in the placenta at all stages of pregnancy. Expression increases as pregnancy progresses.

It is found in the cytoplasm. Its subcellular location is the endoplasmic reticulum membrane. The protein localises to the nucleus. The enzyme catalyses Thiol-dependent hydrolysis of ester, thioester, amide, peptide and isopeptide bonds formed by the C-terminal Gly of ubiquitin (a 76-residue protein attached to proteins as an intracellular targeting signal).. Functionally, ubiquitin-protein hydrolase involved both in the processing of ubiquitin precursors and of ubiquitinated proteins. This enzyme is a thiol protease that recognizes and hydrolyzes a peptide bond at the C-terminal glycine of ubiquitin. Also binds to free monoubiquitin and may prevent its degradation in lysosomes. The homodimer may have ATP-independent ubiquitin ligase activity. This chain is Ubiquitin carboxyl-terminal hydrolase isozyme L1 (UCHL1), found in Macaca fascicularis (Crab-eating macaque).